The following is a 132-amino-acid chain: DNA-directed RNA polymerase subunit omega (132 aa).

The protein belongs to the RNA polymerase subunit omega family. The RNAP catalytic core consists of 2 alpha, 1 beta, 1 beta' and 1 omega subunit. When a sigma factor is associated with the core the holoenzyme is formed, which can initiate transcription.

It carries out the reaction RNA(n) + a ribonucleoside 5'-triphosphate = RNA(n+1) + diphosphate. Promotes RNA polymerase assembly. Latches the N- and C-terminal regions of the beta' subunit thereby facilitating its interaction with the beta and alpha subunits. This Bartonella quintana (strain Toulouse) (Rochalimaea quintana) protein is DNA-directed RNA polymerase subunit omega.